A 509-amino-acid chain; its full sequence is ATP synthase subunit alpha (509 aa).

169 to 176 lines the ATP pocket; sequence GDRQTGKT.

It belongs to the ATPase alpha/beta chains family. F-type ATPases have 2 components, CF(1) - the catalytic core - and CF(0) - the membrane proton channel. CF(1) has five subunits: alpha(3), beta(3), gamma(1), delta(1), epsilon(1). CF(0) has four main subunits: a(1), b(1), b'(1) and c(9-12).

The protein resides in the cell inner membrane. It catalyses the reaction ATP + H2O + 4 H(+)(in) = ADP + phosphate + 5 H(+)(out). In terms of biological role, produces ATP from ADP in the presence of a proton gradient across the membrane. The alpha chain is a regulatory subunit. The chain is ATP synthase subunit alpha from Bradyrhizobium sp. (strain ORS 278).